Reading from the N-terminus, the 821-residue chain is Lon protease (821 aa).

One can recognise a Lon N-terminal domain in the interval 18 to 216 (LPLMSLREVV…KVYELLQGEI (199 aa)). ATP is bound at residue 368–375 (GPPGVGKT). One can recognise a Lon proteolytic domain in the interval 606 to 787 (TSQVGVCTGL…DEVLPQALMA (182 aa)). Residues Ser693 and Lys736 contribute to the active site.

Belongs to the peptidase S16 family. Homohexamer. Organized in a ring with a central cavity.

It is found in the cytoplasm. The catalysed reaction is Hydrolysis of proteins in presence of ATP.. Its function is as follows. ATP-dependent serine protease that mediates the selective degradation of mutant and abnormal proteins as well as certain short-lived regulatory proteins. Required for cellular homeostasis and for survival from DNA damage and developmental changes induced by stress. Degrades polypeptides processively to yield small peptide fragments that are 5 to 10 amino acids long. Binds to DNA in a double-stranded, site-specific manner. The chain is Lon protease from Nitratidesulfovibrio vulgaris (strain ATCC 29579 / DSM 644 / CCUG 34227 / NCIMB 8303 / VKM B-1760 / Hildenborough) (Desulfovibrio vulgaris).